The chain runs to 856 residues: FO synthase (856 aa).

Radical SAM core domains follow at residues 84–336 and 544–785; these read ISYS…APPN and VTFV…SHIQ. A cofG-like region spans residues 85–417; the sequence is SYSRKVFIPV…PRVRGHVVAL (333 aa). 6 residues coordinate [4Fe-4S] cluster: Cys-98, Cys-102, Cys-105, Cys-558, Cys-562, and Cys-565. Positions 521–854 are cofH-like; sequence DGPALEAVAA…RQRTTTYALL (334 aa).

The protein in the N-terminal section; belongs to the radical SAM superfamily. CofG family. This sequence in the C-terminal section; belongs to the radical SAM superfamily. CofH family. [4Fe-4S] cluster serves as cofactor.

It catalyses the reaction 5-amino-6-(D-ribitylamino)uracil + L-tyrosine + S-adenosyl-L-methionine = 5-amino-5-(4-hydroxybenzyl)-6-(D-ribitylimino)-5,6-dihydrouracil + 2-iminoacetate + 5'-deoxyadenosine + L-methionine + H(+). The catalysed reaction is 5-amino-5-(4-hydroxybenzyl)-6-(D-ribitylimino)-5,6-dihydrouracil + S-adenosyl-L-methionine = 7,8-didemethyl-8-hydroxy-5-deazariboflavin + 5'-deoxyadenosine + L-methionine + NH4(+) + H(+). It functions in the pathway cofactor biosynthesis; coenzyme F0 biosynthesis. Its function is as follows. Catalyzes the radical-mediated synthesis of 7,8-didemethyl-8-hydroxy-5-deazariboflavin (FO) from 5-amino-6-(D-ribitylamino)uracil and L-tyrosine. The chain is FO synthase (fbiC) from Mycobacterium bovis (strain ATCC BAA-935 / AF2122/97).